The primary structure comprises 289 residues: MIFEIIKIGSQPINFAYPIPLLSLLAFMLSGSGYNELIISYIFAFSFFTAANLWNHLNDAEDDLNAGRNYARFLIEHRKIVTEFVVAFYFVSFLLIFFISKSKEIALLLTGLSVVLTWLYSDKIFIGKIIRRFKEDYKTEVFTYILCSFSFPLSFWTIFSEISQVGVVFTLATGFTYLSGFFLKDLKDISADIKSGYRTLAVVLSPSTLLIISVMLFIASTFVVIFSSLLDVTPTSSLLVLTVYPPILFAIYKFHKEKWKITKNIISSLKIYTYSYLGFLIAFAIGCKL.

9 consecutive transmembrane segments (helical) span residues 13–32, 37–59, 80–99, 104–121, 141–160, 165–183, 203–225, 235–252, and 265–287; these read INFA…LSGS, LIIS…HLND, IVTE…IFFI, EIAL…WLYS, VFTY…TIFS, VGVV…GFFL, VLSP…FVVI, TSSL…FAIY, and IISS…AIGC.

The protein resides in the cell membrane. This is an uncharacterized protein from Archaeoglobus fulgidus (strain ATCC 49558 / DSM 4304 / JCM 9628 / NBRC 100126 / VC-16).